The following is a 490-amino-acid chain: MTVAAPAKVEYEAVIGLEVHCQLSTRSKIFSSSATAFGAPPNTQIDPVCMGLPGTLPVLNEKVLEYAVKAGLALNCTIAPYSKFDRKQYFYPDLPKNYQISQYDLPIATHGWVEIQLSDGRSKRIGITRLHIEEDAGKLVHAGSDRLSGSSYSLVDFNRAGVPLIEIVSEPDIRTGEEAAEYVQELRRILRYAGLCDGNLQEGSLRCDVNISVRPLGSPTFGTKVEIKNMNSFNAIQRAIEYEFNRQVKAVEAGEPIVQETRLWEENSQRTISMRKKEGSSDYRYFPEPDLPPIRVTEAQKARWQAELPELPSVKRRRYQQVYGLSVYDSRYLSDERNTAEYFEAVVAAGADPKAAANWMMSDIASYLNTHKLDYPDIALKPETLAELIGLIEQGTISSKIAKEILPELLEKGGSARALVEAKGLTQISDSSLLEPMIAEVLAENPEQLQQYREGKTKLFGYFVGQLMKKTQGRADPKLANELLKRHLDG.

Belongs to the GatB/GatE family. GatB subfamily. Heterotrimer of A, B and C subunits.

It catalyses the reaction L-glutamyl-tRNA(Gln) + L-glutamine + ATP + H2O = L-glutaminyl-tRNA(Gln) + L-glutamate + ADP + phosphate + H(+). The enzyme catalyses L-aspartyl-tRNA(Asn) + L-glutamine + ATP + H2O = L-asparaginyl-tRNA(Asn) + L-glutamate + ADP + phosphate + 2 H(+). In terms of biological role, allows the formation of correctly charged Asn-tRNA(Asn) or Gln-tRNA(Gln) through the transamidation of misacylated Asp-tRNA(Asn) or Glu-tRNA(Gln) in organisms which lack either or both of asparaginyl-tRNA or glutaminyl-tRNA synthetases. The reaction takes place in the presence of glutamine and ATP through an activated phospho-Asp-tRNA(Asn) or phospho-Glu-tRNA(Gln). The sequence is that of Aspartyl/glutamyl-tRNA(Asn/Gln) amidotransferase subunit B from Synechococcus sp. (strain JA-3-3Ab) (Cyanobacteria bacterium Yellowstone A-Prime).